The chain runs to 195 residues: Achaete-scute homolog 1b (195 aa).

Positions 66-118 (MAVARRNERERNRVKQVNMGFQTLRQHVPNGAANKKMSKVETLRSAVEYIRAL) constitute a bHLH domain. The segment at 141–164 (VSNAYSAGPESPHSAYSSDEGSYE) is disordered.

As to quaternary structure, efficient DNA binding requires dimerization with another bHLH protein. In terms of tissue distribution, in the 24 hours embryo, expressed in hindbrain close to the anterior and posterior boundaries of rhombomeres 2-6 and in ventral cells close to the floor plate of most rhombomeres. Also expressed in the telencephalon, diencephalon, tegmentum and spinal cord at sites distinct from those expressing ascl1a. Not expressed in the adenohypophysis.

The protein resides in the nucleus. Functionally, transcriptional regulator. May mediate transcription activation by binding to the E box-containing promoter. Involved in neurogenesis. Involved in maintaining rhombomere boundaries in the hindbrain, probably via up-regulation of delta expression. May mediate transcription activation by binding to the E box-containing promoter. The sequence is that of Achaete-scute homolog 1b from Danio rerio (Zebrafish).